A 631-amino-acid polypeptide reads, in one-letter code: Chaperone protein HtpG (631 aa).

The segment at 1 to 342 (MSEQTANKET…SNDLPLNVSR (342 aa)) is a; substrate-binding. Residues 343 to 559 (EILQDNKVTQ…DFEMGTQMAK (217 aa)) form a b region. The tract at residues 560–631 (LLEAAGQAAP…LSAMNQLLAK (72 aa)) is c.

It belongs to the heat shock protein 90 family. As to quaternary structure, homodimer.

The protein localises to the cytoplasm. In terms of biological role, molecular chaperone. Has ATPase activity. The polypeptide is Chaperone protein HtpG (Aliivibrio fischeri (strain ATCC 700601 / ES114) (Vibrio fischeri)).